An 87-amino-acid polypeptide reads, in one-letter code: Small ribosomal subunit protein bS20 (87 aa).

Over residues 1 to 11 (MAHHKSAIKRI) the composition is skewed to basic residues. The segment at 1 to 26 (MAHHKSAIKRIKQNEKRNARNRHQKS) is disordered.

The protein belongs to the bacterial ribosomal protein bS20 family.

In terms of biological role, binds directly to 16S ribosomal RNA. This chain is Small ribosomal subunit protein bS20, found in Trichlorobacter lovleyi (strain ATCC BAA-1151 / DSM 17278 / SZ) (Geobacter lovleyi).